The sequence spans 100 residues: Large ribosomal subunit protein bL28 (100 aa).

Positions 1–25 (MTRRCDITGKSVLSGNNVSHANNKS) are disordered. The segment covering 11-22 (SVLSGNNVSHAN) has biased composition (polar residues).

The protein belongs to the bacterial ribosomal protein bL28 family.

The polypeptide is Large ribosomal subunit protein bL28 (Acidiphilium cryptum (strain JF-5)).